Here is an 860-residue protein sequence, read N- to C-terminus: Nuclear pore complex protein NUP93B (860 aa).

The protein belongs to the nucleoporin interacting component (NIC) family. As to quaternary structure, part of the nuclear pore complex (NPC). The NPC has an eight-fold symmetrical structure comprising a central transport channel and two rings, the cytoplasmic and nuclear rings, to which eight filaments are attached. The cytoplasmic filaments have loose ends, while the nuclear filaments are joined in a distal ring, forming a nuclear basket. NPCs are highly dynamic in configuration and composition, and can be devided in 3 subcomplexes, the NUP62 subcomplex, the NUP107-160 subcomplex and the NUP93 subcomplex, containing approximately 30 different nucleoporin proteins.

Its subcellular location is the nucleus envelope. It localises to the nucleus. The protein localises to the nuclear pore complex. This chain is Nuclear pore complex protein NUP93B, found in Arabidopsis thaliana (Mouse-ear cress).